We begin with the raw amino-acid sequence, 229 residues long: Cytochrome c oxidase subunit 2 (229 aa).

Residues 1–14 (MPTPNQTNFQDAAS) are Mitochondrial intermembrane-facing. Residues 15 to 45 (PLMEELTHFHDHTLMIVFMISLLVLYILLSM) traverse the membrane as a helical segment. Residues 46–59 (LSTKLTHTNTANAQ) lie on the Mitochondrial matrix side of the membrane. A helical transmembrane segment spans residues 60-87 (QAEMVWTILPAIILITIALPSLQILYMM). Topologically, residues 88–229 (DEINKPHMTI…DLWLAMIDTL (142 aa)) are mitochondrial intermembrane. Cu cation-binding residues include His161, Cys196, Glu198, Cys200, His204, and Met207. Glu198 provides a ligand contact to Mg(2+).

It belongs to the cytochrome c oxidase subunit 2 family. Component of the cytochrome c oxidase (complex IV, CIV), a multisubunit enzyme composed of 14 subunits. The complex is composed of a catalytic core of 3 subunits MT-CO1, MT-CO2 and MT-CO3, encoded in the mitochondrial DNA, and 11 supernumerary subunits COX4I, COX5A, COX5B, COX6A, COX6B, COX6C, COX7A, COX7B, COX7C, COX8 and NDUFA4, which are encoded in the nuclear genome. The complex exists as a monomer or a dimer and forms supercomplexes (SCs) in the inner mitochondrial membrane with NADH-ubiquinone oxidoreductase (complex I, CI) and ubiquinol-cytochrome c oxidoreductase (cytochrome b-c1 complex, complex III, CIII), resulting in different assemblies (supercomplex SCI(1)III(2)IV(1) and megacomplex MCI(2)III(2)IV(2)). Found in a complex with TMEM177, COA6, COX18, COX20, SCO1 and SCO2. Interacts with TMEM177 in a COX20-dependent manner. Interacts with COX20. Interacts with COX16. It depends on Cu cation as a cofactor.

It localises to the mitochondrion inner membrane. It catalyses the reaction 4 Fe(II)-[cytochrome c] + O2 + 8 H(+)(in) = 4 Fe(III)-[cytochrome c] + 2 H2O + 4 H(+)(out). Its function is as follows. Component of the cytochrome c oxidase, the last enzyme in the mitochondrial electron transport chain which drives oxidative phosphorylation. The respiratory chain contains 3 multisubunit complexes succinate dehydrogenase (complex II, CII), ubiquinol-cytochrome c oxidoreductase (cytochrome b-c1 complex, complex III, CIII) and cytochrome c oxidase (complex IV, CIV), that cooperate to transfer electrons derived from NADH and succinate to molecular oxygen, creating an electrochemical gradient over the inner membrane that drives transmembrane transport and the ATP synthase. Cytochrome c oxidase is the component of the respiratory chain that catalyzes the reduction of oxygen to water. Electrons originating from reduced cytochrome c in the intermembrane space (IMS) are transferred via the dinuclear copper A center (CU(A)) of subunit 2 and heme A of subunit 1 to the active site in subunit 1, a binuclear center (BNC) formed by heme A3 and copper B (CU(B)). The BNC reduces molecular oxygen to 2 water molecules using 4 electrons from cytochrome c in the IMS and 4 protons from the mitochondrial matrix. This is Cytochrome c oxidase subunit 2 (MT-CO2) from Pelomedusa subrufa (African side-necked turtle).